The chain runs to 907 residues: MISGLLKKIFGSRNDRLIRQYSQTVRAINALEPEISALSDEALQAKTADFKQRVANGESLDSILPEAFAVVREAGKRVHGMRHFDVQLIGGMVLHNGKISEMRTGEGKTLVATLPAYLNALTGKGVHVITVNDYLASRDADWMGRIYGFLGLTTGCNLSRMGHEAKQAAYASDITYGTNNEFGFDYLRDNMVYSTGERVQRGLSFAIVDEVDSILIDEARTPLIISGQAEDHTDLYLKLNQVAPMLAEQEGEGDNVIKPGDYTLDLKARQVLLTEQGHENAEQILTRMGLLAEGTSLYDPGNILLVHHLYAALRAHSLYHKDQHYVVQNNEVVIVDEFTGRLMAGRRWSDGLHQAVEAKESVRIQAENQTLASITFQNYFRMYGKLAGMTGTADTEAFEFHSIYGLETVVVPTNRAMVRKDENDKVYRTAKEKWDAVIADIRGCVERGQPVLVGTTSIEINEFLSGELNRVDLSHQVLNAKQHEHEAEIVAQAGRPGVITIATNMAGRGTDIVLGGSIERQLAAVRDDETLTPEQKEARTAALREEWKPVHEQVLANGGLHIIGTERHESRRIDNQLRGRAGRQGDPGSSRFYLSLEDPLMKIFAGERLNAIMVRLKMPEGEAIEHAMVTRSLESAQRKVEQRNFDIRKQLLEYDDVANDQRKVIYQQRNELLEADDISETIRAMRQGVLHDSFRVHVPVDSVEEQWDIAALEQALASEFQLRLPIGEWLKAEPNLDDETILKRLLAAAEEQYAVKTAQVDPVAWHQFERNVMLQSLDTHWREHLAALDHLRQGIHLRGYAQKNPKQEYKREAFELFETLLDTVRNDVSKLLMTVQVRTEAQLEEAEVPPELENVQYQHAAFDEALGVATAPEAAQAAAPAGPKIGRNDPCPCGSGKKYKHCHGKLS.

ATP is bound by residues Q87, G105–T109, and D511. Zn(2+)-binding residues include C891, C893, C902, and H903.

The protein belongs to the SecA family. As to quaternary structure, monomer and homodimer. Part of the essential Sec protein translocation apparatus which comprises SecA, SecYEG and auxiliary proteins SecDF-YajC and YidC. It depends on Zn(2+) as a cofactor.

It localises to the cell inner membrane. Its subcellular location is the cytoplasm. It carries out the reaction ATP + H2O + cellular proteinSide 1 = ADP + phosphate + cellular proteinSide 2.. Functionally, part of the Sec protein translocase complex. Interacts with the SecYEG preprotein conducting channel. Has a central role in coupling the hydrolysis of ATP to the transfer of proteins into and across the cell membrane, serving both as a receptor for the preprotein-SecB complex and as an ATP-driven molecular motor driving the stepwise translocation of polypeptide chains across the membrane. This is Protein translocase subunit SecA from Aromatoleum aromaticum (strain DSM 19018 / LMG 30748 / EbN1) (Azoarcus sp. (strain EbN1)).